A 185-amino-acid polypeptide reads, in one-letter code: Ribosome-recycling factor (185 aa).

The protein belongs to the RRF family.

The protein localises to the cytoplasm. In terms of biological role, responsible for the release of ribosomes from messenger RNA at the termination of protein biosynthesis. May increase the efficiency of translation by recycling ribosomes from one round of translation to another. This chain is Ribosome-recycling factor, found in Clostridium beijerinckii (strain ATCC 51743 / NCIMB 8052) (Clostridium acetobutylicum).